The sequence spans 577 residues: F-box/TPR repeat protein pof3 (577 aa).

3 TPR repeats span residues 6–39 (VKAI…EPNP), 41–74 (IDLF…NARN), and 76–108 (RGYL…VHKM). In terms of domain architecture, F-box spans 138-180 (ILPREVLLCILQQLNFKSIVQCMQVCKHWRDCIKKEPSLFCCL).

As to quaternary structure, a part of the E3 ubiquitin ligase Skp1-Cullin-1-F-box (SCF) complex. Interacts with cul1, mcl1 and skp1.

It is found in the mitochondrion. Its subcellular location is the nucleus. Its function is as follows. Has a role in substrate recognition in the Skp1-Cullin-1/Cdc53-F-box (SCF) ubiquitin ligase complex. Required for the maintenance of telomere length and transcriptional silencing at the telomere. Also required for chromosome segregation. In Schizosaccharomyces pombe (strain 972 / ATCC 24843) (Fission yeast), this protein is F-box/TPR repeat protein pof3 (pof3).